The primary structure comprises 174 residues: Transcription factor bHLH36 (174 aa).

In terms of domain architecture, bHLH spans 1–53 (MEKMMHRETERQRRQEMASLYASLRSLLPLHFIKGKRSTSDQVNEAVNYIKYL).

As to quaternary structure, homodimer. As to expression, expressed constitutively in roots, leaves, stems, and flowers.

The protein localises to the nucleus. This chain is Transcription factor bHLH36 (BHLH36), found in Arabidopsis thaliana (Mouse-ear cress).